A 2604-amino-acid chain; its full sequence is BEACH domain-containing protein B (2604 aa).

The BEACH-type PH domain maps to 1761–1912 (VGTSEVLTSV…NAKEVGMLIV (152 aa)). Positions 1936-2226 (DRRIAMEMAE…QIFRKKHPRR (291 aa)) constitute a BEACH domain. 6 WD repeats span residues 2254–2293 (HSPSAVLYVGVVDSNIVLVNQGLTLSVKIWLTTQLHSGGN), 2368–2407 (HHKDVVSCVAVTADSTILATGSYDTTVMVWDILRMRTPEK), 2433–2474 (GHDD…RSLK), 2476–2515 (PSGSAVSKLAASHHGRIVLYGDDDLSLHLYSINGKHLASS), 2516–2557 (ESNG…KRYN), and 2558–2596 (GAGKIITSLTVTQEECFLAGTKDGALLVYSIENPQHRKP).

May be involved in the suppression of BCHC1 activity. This chain is BEACH domain-containing protein B, found in Arabidopsis thaliana (Mouse-ear cress).